A 482-amino-acid polypeptide reads, in one-letter code: Glycogen synthase (482 aa).

K21 contributes to the ADP-alpha-D-glucose binding site.

It belongs to the glycosyltransferase 1 family. Bacterial/plant glycogen synthase subfamily.

The enzyme catalyses [(1-&gt;4)-alpha-D-glucosyl](n) + ADP-alpha-D-glucose = [(1-&gt;4)-alpha-D-glucosyl](n+1) + ADP + H(+). It participates in glycan biosynthesis; glycogen biosynthesis. Its function is as follows. Synthesizes alpha-1,4-glucan chains using ADP-glucose. The chain is Glycogen synthase from Clostridium perfringens (strain 13 / Type A).